We begin with the raw amino-acid sequence, 550 residues long: Probable acyl-activating enzyme 9 (550 aa).

This sequence belongs to the ATP-dependent AMP-binding enzyme family. Expressed in leaves, flowers and developing seeds.

In terms of biological role, may act as an acid--thiol ligase that activates carboxylic acids by forming acyl-CoAs. The sequence is that of Probable acyl-activating enzyme 9 (AEE9) from Arabidopsis thaliana (Mouse-ear cress).